The sequence spans 248 residues: Polyhedrin (248 aa).

The first 27 residues, 1 to 27, serve as a signal peptide directing secretion; that stretch reads MADVAGTSNRDFRGREQRLFNSEQYNY. N-linked (GlcNAc...) asparagine; by host glycosylation is found at Asn-28, Asn-77, Asn-86, and Asn-237.

It is found in the host cytoplasm. Functionally, major component of the virus occlusion bodies, which are large proteinaceous structures (polyhedra), that protect the virus from the outside environment for extended periods until they are ingested by insect larvae. This Bombyx mori cytoplasmic polyhedrosis virus (BmCPV) protein is Polyhedrin.